The sequence spans 537 residues: 5,6-dihydroxyindole-2-carboxylic acid oxidase (537 aa).

Residues 1–24 (MSAPKLLSLGCIFFPLLLFQQARA) form the signal peptide. The Lumenal, melanosome portion of the chain corresponds to 25–477 (QFPRQCATVE…WPSREFSVPE (453 aa)). 5 disulfide bridges follow: Cys30–Cys41, Cys42–Cys65, Cys56–Cys99, Cys101–Cys110, and Cys113–Cys122. Residues Asn96 and Asn104 are each glycosylated (N-linked (GlcNAc...) asparagine). N-linked (GlcNAc...) asparagine glycosylation is present at Asn181. Residues His192, His215, and His224 each contribute to the Zn(2+) site. 2 disulfide bridges follow: Cys258–Cys261 and Cys290–Cys303. Asn304 and Asn350 each carry an N-linked (GlcNAc...) asparagine glycan. Zn(2+) is bound by residues His377 and His381. Asn385 is a glycosylation site (N-linked (GlcNAc...) asparagine). Position 404 (His404) interacts with Zn(2+). The chain crosses the membrane as a helical span at residues 478–501 (IIAIAVVGALLLVALIFGTASYLI). The Cytoplasmic portion of the chain corresponds to 502-537 (RARRSMDEANQPLLTDQYQCYAEEYEKLQNPNQSVV).

The protein belongs to the tyrosinase family. In terms of assembly, monomer. Interacts with ATP7A. Interacts with SLC45A2. Cu(2+) serves as cofactor. Requires Zn(2+) as cofactor. In terms of processing, glycosylated. In terms of tissue distribution, pigment cells.

Its subcellular location is the melanosome membrane. The enzyme catalyses 2 5,6-dihydroxyindole-2-carboxylate + O2 = 2 indole-5,6-quinone-2-carboxylate + 2 H2O. It participates in pigment biosynthesis; melanin biosynthesis. With respect to regulation, the activity depends critically on the nature of the bound metal ion. Catalyzes the oxidation of 5,6-dihydroxyindole-2-carboxylic acid (DHICA) in the presence of bound Cu(2+) ions, but lacks activity in the presence of bound Zn(2+) ions. Plays a role in melanin biosynthesis. Catalyzes the oxidation of 5,6-dihydroxyindole-2-carboxylic acid (DHICA) into indole-5,6-quinone-2-carboxylic acid in the presence of bound Cu(2+) ions, but not in the presence of Zn(2+). May regulate or influence the type of melanin synthesized. Also to a lower extent, capable of hydroxylating tyrosine and producing melanin. In Homo sapiens (Human), this protein is 5,6-dihydroxyindole-2-carboxylic acid oxidase.